Here is a 174-residue protein sequence, read N- to C-terminus: Protein GrpE (174 aa).

Residues 1–35 (MAQDIKNEEVEEVQEEEVVETAEETTPEKSELDLA) are disordered. Residues 9-25 (EVEEVQEEEVVETAEET) show a composition bias toward acidic residues. Positions 26 to 35 (TPEKSELDLA) are enriched in basic and acidic residues.

It belongs to the GrpE family. In terms of assembly, homodimer.

It localises to the cytoplasm. Participates actively in the response to hyperosmotic and heat shock by preventing the aggregation of stress-denatured proteins, in association with DnaK and GrpE. It is the nucleotide exchange factor for DnaK and may function as a thermosensor. Unfolded proteins bind initially to DnaJ; upon interaction with the DnaJ-bound protein, DnaK hydrolyzes its bound ATP, resulting in the formation of a stable complex. GrpE releases ADP from DnaK; ATP binding to DnaK triggers the release of the substrate protein, thus completing the reaction cycle. Several rounds of ATP-dependent interactions between DnaJ, DnaK and GrpE are required for fully efficient folding. The protein is Protein GrpE of Streptococcus pneumoniae (strain ATCC 700669 / Spain 23F-1).